Reading from the N-terminus, the 320-residue chain is MAEFRIDPEMELPVLPSRARADVSRKPEWLKINLRTDAEFVELKRLMRGQGLHTVCEEARCPNIFECWNRRTATFMILGDICTRNCGFCAVRSGVPTGLDLAEPERVADACVQLGLRHVVVTSVARDDLSDGGASIFAETIRAIRRKNPFTGVEVLIPDFGGNWDALAVVMDAEPDVLNHNIETVRRLSDRVRSRAKYDRSLELLRRAKEMKPHVSTKSSIMVGLGETMQELYEAMDDLRAAGVDIVTFGQYLRPTARHLAVEKFYTPAEFEHLREEALKRGFAHCESGPLVRSSYHADEQSAQAVARRTGAGRAAQTGD.

Cysteine 56, cysteine 61, cysteine 67, cysteine 82, cysteine 86, cysteine 89, and serine 295 together coordinate [4Fe-4S] cluster. Positions 68–284 (WNRRTATFMI…REEALKRGFA (217 aa)) constitute a Radical SAM core domain. Residues 300–320 (EQSAQAVARRTGAGRAAQTGD) form a disordered region. Residues 303-320 (AQAVARRTGAGRAAQTGD) are compositionally biased toward low complexity.

This sequence belongs to the radical SAM superfamily. Lipoyl synthase family. Requires [4Fe-4S] cluster as cofactor.

The protein resides in the cytoplasm. It carries out the reaction [[Fe-S] cluster scaffold protein carrying a second [4Fe-4S](2+) cluster] + N(6)-octanoyl-L-lysyl-[protein] + 2 oxidized [2Fe-2S]-[ferredoxin] + 2 S-adenosyl-L-methionine + 4 H(+) = [[Fe-S] cluster scaffold protein] + N(6)-[(R)-dihydrolipoyl]-L-lysyl-[protein] + 4 Fe(3+) + 2 hydrogen sulfide + 2 5'-deoxyadenosine + 2 L-methionine + 2 reduced [2Fe-2S]-[ferredoxin]. It functions in the pathway protein modification; protein lipoylation via endogenous pathway; protein N(6)-(lipoyl)lysine from octanoyl-[acyl-carrier-protein]: step 2/2. In terms of biological role, catalyzes the radical-mediated insertion of two sulfur atoms into the C-6 and C-8 positions of the octanoyl moiety bound to the lipoyl domains of lipoate-dependent enzymes, thereby converting the octanoylated domains into lipoylated derivatives. In Symbiobacterium thermophilum (strain DSM 24528 / JCM 14929 / IAM 14863 / T), this protein is Lipoyl synthase.